A 91-amino-acid chain; its full sequence is Probable Fe(2+)-trafficking protein (91 aa).

Belongs to the Fe(2+)-trafficking protein family.

Its function is as follows. Could be a mediator in iron transactions between iron acquisition and iron-requiring processes, such as synthesis and/or repair of Fe-S clusters in biosynthetic enzymes. The sequence is that of Probable Fe(2+)-trafficking protein from Shewanella denitrificans (strain OS217 / ATCC BAA-1090 / DSM 15013).